A 629-amino-acid chain; its full sequence is tRNA uridine 5-carboxymethylaminomethyl modification enzyme MnmG (629 aa).

Residues 13–18 (GGGHAG), Val-125, and Ser-180 each bind FAD. 273–287 (GPRYCPSIEDKVMRF) is a binding site for NAD(+). FAD is bound at residue Gln-370.

This sequence belongs to the MnmG family. As to quaternary structure, homodimer. Heterotetramer of two MnmE and two MnmG subunits. FAD is required as a cofactor.

It is found in the cytoplasm. Its function is as follows. NAD-binding protein involved in the addition of a carboxymethylaminomethyl (cmnm) group at the wobble position (U34) of certain tRNAs, forming tRNA-cmnm(5)s(2)U34. The sequence is that of tRNA uridine 5-carboxymethylaminomethyl modification enzyme MnmG from Shigella dysenteriae serotype 1 (strain Sd197).